The primary structure comprises 320 residues: Malate dehydrogenase (320 aa).

NAD(+) contacts are provided by residues 10 to 15 (GAGQIG) and aspartate 34. Substrate contacts are provided by arginine 83 and arginine 89. Residues asparagine 96 and 119–121 (ITN) each bind NAD(+). 2 residues coordinate substrate: asparagine 121 and arginine 152. The active-site Proton acceptor is the histidine 176.

The protein belongs to the LDH/MDH superfamily. MDH type 3 family.

The enzyme catalyses (S)-malate + NAD(+) = oxaloacetate + NADH + H(+). Catalyzes the reversible oxidation of malate to oxaloacetate. The protein is Malate dehydrogenase of Methylorubrum extorquens (strain CM4 / NCIMB 13688) (Methylobacterium extorquens).